Here is a 177-residue protein sequence, read N- to C-terminus: TRAF-interacting protein with FHA domain-containing protein A (177 aa).

The 57-residue stretch at 48–104 (VAFGRDYNVCRYPLLSNRVSRIQFNLQFFKHFNCSTTAIEIKNLSKKNKLYVDNLEL) folds into the FHA domain.

It belongs to the TIFA family. Interacts with traf6.

Its subcellular location is the cytoplasm. Adapter molecule that plays a key role in the activation of pro-inflammatory NF-kappa-B signaling following detection of bacterial pathogen-associated molecular pattern metabolites (PAMPs). Promotes activation of an innate immune response by inducing the oligomerization and polyubiquitination of TRAF6, which leads to the activation of TAK1 and IKK through a proteasome-independent mechanism. The sequence is that of TRAF-interacting protein with FHA domain-containing protein A from Xenopus tropicalis (Western clawed frog).